We begin with the raw amino-acid sequence, 1203 residues long: DNA-directed RNA polymerase subunit beta (1203 aa).

A disordered region spans residues 1167–1203 (LSKYAQQQEEQRKAAAQTDESKTAPATKNESQPNTQD). Positions 1190–1203 (APATKNESQPNTQD) are enriched in polar residues.

This sequence belongs to the RNA polymerase beta chain family. As to quaternary structure, the RNAP catalytic core consists of 2 alpha, 1 beta, 1 beta' and 1 omega subunit. When a sigma factor is associated with the core the holoenzyme is formed, which can initiate transcription.

The catalysed reaction is RNA(n) + a ribonucleoside 5'-triphosphate = RNA(n+1) + diphosphate. Its function is as follows. DNA-dependent RNA polymerase catalyzes the transcription of DNA into RNA using the four ribonucleoside triphosphates as substrates. This chain is DNA-directed RNA polymerase subunit beta, found in Levilactobacillus brevis (strain ATCC 367 / BCRC 12310 / CIP 105137 / JCM 1170 / LMG 11437 / NCIMB 947 / NCTC 947) (Lactobacillus brevis).